Here is a 374-residue protein sequence, read N- to C-terminus: Cell division protein DivIB (374 aa).

The segment at 1 to 90 (MWKISNENDI…EEEHFADRLP (90 aa)) is disordered. Topologically, residues 1–103 (MWKISNENDI…KTRNKRLYRR (103 aa)) are cytoplasmic. Over residues 39–53 (YLKKQAEEAASKGEN) the composition is skewed to basic and acidic residues. Positions 56–75 (AEVTITLQEQSQEEPQQHLP) are enriched in polar residues. A helical membrane pass occupies residues 104 to 124 (LAFILTCLGTAILVALYFVSP). At 125-374 (LSRLSEVTVS…GENQEVQQAE (250 aa)) the chain is on the extracellular side. A POTRA domain is found at 126-197 (SRLSEVTVSG…NSFKIDIQEY (72 aa)). The segment at 325-374 (KESEETGSEVSEDSAVENQEVVDPNAGVATDEANNGTPTNGENQEVQQAE) is disordered. Residues 326-339 (ESEETGSEVSEDSA) show a composition bias toward acidic residues. The segment covering 356–374 (EANNGTPTNGENQEVQQAE) has biased composition (polar residues).

The protein belongs to the FtsQ/DivIB family. DivIB subfamily.

The protein localises to the cell membrane. In terms of biological role, cell division protein that may be involved in stabilizing or promoting the assembly of the division complex. This chain is Cell division protein DivIB, found in Enterococcus faecalis (strain ATCC 700802 / V583).